The primary structure comprises 886 residues: DNA mismatch repair protein MutS (886 aa).

641–648 (GPNMAGKS) serves as a coordination point for ATP.

Belongs to the DNA mismatch repair MutS family.

This protein is involved in the repair of mismatches in DNA. It is possible that it carries out the mismatch recognition step. This protein has a weak ATPase activity. In Rickettsia akari (strain Hartford), this protein is DNA mismatch repair protein MutS.